The sequence spans 145 residues: Probable transport accessory protein MmpS2 (145 aa).

A helical membrane pass occupies residues 11–31 (MWLLLAIVVVAVVGGLGIYRL).

Belongs to the MmpS family.

It is found in the cell membrane. The chain is Probable transport accessory protein MmpS2 (mmpS2) from Mycobacterium bovis (strain ATCC BAA-935 / AF2122/97).